The sequence spans 697 residues: Serine/threonine-protein kinase tousled-like 2 (697 aa).

Disordered stretches follow at residues 25–159 and 288–316; these read VAKG…SQSE and KLLI…SKSN. Polar residues predominate over residues 31 to 44; sequence HNESSNQSLCSVGS. The span at 46 to 61 shows a compositional bias: basic and acidic residues; it reads SDKELETPEKKSNDQR. Residues 109 to 145 are compositionally biased toward polar residues; that stretch reads SSPQHSLSNPPAAVQQGSPSSISSVNTDHSHTSTSHK. Coiled-coil stretches lie at residues 265 to 294 and 336 to 373; these read AFQN…IKKK and KLRL…IHNE. Residues 388–666 enclose the Protein kinase domain; that stretch reads YLLLHLLGRG…VHQLASDPYL (279 aa). Residues 394 to 402 and Lys-417 each bind ATP; that span reads LGRGGFSEV. Asp-518 functions as the Proton acceptor in the catalytic mechanism.

It belongs to the protein kinase superfamily. Ser/Thr protein kinase family. In terms of assembly, monomer. May form homodimers; homodimerization may enhance autophosphoylation and enzymatic activity. Heterodimer with TLK1. The cofactor is Mg(2+). Phosphorylated. Autophosphorylated; phosphorylation promotes the assembly of higher order oligomers and enzymatic activity.

Its subcellular location is the nucleus. The protein localises to the nucleoplasm. The protein resides in the cytoplasm. It localises to the perinuclear region. It is found in the cytoskeleton. The catalysed reaction is L-seryl-[protein] + ATP = O-phospho-L-seryl-[protein] + ADP + H(+). It catalyses the reaction L-threonyl-[protein] + ATP = O-phospho-L-threonyl-[protein] + ADP + H(+). Functionally, serine/threonine-protein kinase involved in the process of chromatin assembly and probably also DNA replication, transcription, repair, and chromosome segregation. Negative regulator of amino acid starvation-induced autophagy. This chain is Serine/threonine-protein kinase tousled-like 2, found in Danio rerio (Zebrafish).